The chain runs to 115 residues: MARTAATKLALVALVAAMLLVAADAAITCGQVSSALGPCAAYAKGSGTSPSAGCCSGVKRLAGLARSTADKQATCRCLKSVAGAYNAGRAAGIPSRCGVSVPYTISASVDCSKIH.

Residues 1–25 (MARTAATKLALVALVAAMLLVAADA) form the signal peptide. Cystine bridges form between cysteine 29–cysteine 77, cysteine 39–cysteine 54, cysteine 55–cysteine 97, and cysteine 75–cysteine 111.

The protein belongs to the plant LTP family. In terms of tissue distribution, highly expressed in leaves and coleoptiles. No expression in roots.

Functionally, plant non-specific lipid-transfer proteins transfer phospholipids as well as galactolipids across membranes. May play a role in wax or cutin deposition in the cell walls of expanding epidermal cells and certain secretory tissues. This is Non-specific lipid-transfer protein Cw18 (CW18) from Hordeum vulgare (Barley).